Consider the following 629-residue polypeptide: tRNA uridine 5-carboxymethylaminomethyl modification enzyme MnmG (629 aa).

FAD is bound by residues 13-18 (GGGHAG), Val125, and Ser180. NAD(+) is bound at residue 273 to 287 (GPRYCPSIEDKVMRF). Residue Gln370 participates in FAD binding.

Belongs to the MnmG family. In terms of assembly, homodimer. Heterotetramer of two MnmE and two MnmG subunits. FAD serves as cofactor.

The protein resides in the cytoplasm. Functionally, NAD-binding protein involved in the addition of a carboxymethylaminomethyl (cmnm) group at the wobble position (U34) of certain tRNAs, forming tRNA-cmnm(5)s(2)U34. The sequence is that of tRNA uridine 5-carboxymethylaminomethyl modification enzyme MnmG from Salmonella choleraesuis (strain SC-B67).